A 369-amino-acid polypeptide reads, in one-letter code: MNNHSETESSGHNSVHGNNDNIPGWNEELELAFSAYKGLYLAGRISSRHKTVCEVLVPGAVVQAGISGALQRIGKQPVVGDFVVLLDQPETGSRMVVNILPRRTCLSRGAAGDGGGEQLIAANLDTIFIVTSVGKDLNLRRLERYLAIVYSSGASPVILLNKIDLADDPARLVEKIRDVTGDVPVIPLSALSKTGLDALGPYLNPGETVALVGSSGVGKSTLINAFLGETVQKTADIRKDDEKGRHTTTVRQMFLLPNGAVLIDNPGIREIQLGDSAEGLEKAFSEIVDAARNCKFKDCTHRNEPGCAVLQAVRDGIIPEERLESYHRLTDELSFQSKKAEIGLKRLEKERYREMAVNIKKYRKFTGKP.

Positions 116–271 (GEQLIAANLD…LIDNPGIREI (156 aa)) constitute a CP-type G domain. Residues 161–164 (NKID) and 213–221 (GSSGVGKST) each bind GTP. 4 residues coordinate Zn(2+): Cys294, Cys299, His301, and Cys307.

Belongs to the TRAFAC class YlqF/YawG GTPase family. RsgA subfamily. Monomer. Associates with 30S ribosomal subunit, binds 16S rRNA. The cofactor is Zn(2+).

The protein localises to the cytoplasm. In terms of biological role, one of several proteins that assist in the late maturation steps of the functional core of the 30S ribosomal subunit. Helps release RbfA from mature subunits. May play a role in the assembly of ribosomal proteins into the subunit. Circularly permuted GTPase that catalyzes slow GTP hydrolysis, GTPase activity is stimulated by the 30S ribosomal subunit. In Methanosarcina acetivorans (strain ATCC 35395 / DSM 2834 / JCM 12185 / C2A), this protein is Small ribosomal subunit biogenesis GTPase RsgA.